The sequence spans 255 residues: UPF0246 protein Caul_4480 (255 aa).

This sequence belongs to the UPF0246 family.

This chain is UPF0246 protein Caul_4480, found in Caulobacter sp. (strain K31).